Here is a 365-residue protein sequence, read N- to C-terminus: Protein-glutamate methylesterase/protein-glutamine glutaminase 1 (365 aa).

Residues 4–121 form the Response regulatory domain; the sequence is KVLVVDDSQF…SRDSVVLKKR (118 aa). 4-aspartylphosphate is present on D55. The segment at 138–173 is disordered; it reads AARSTTQPSGVRPSALGANLSSSRSPRPASSAPSAP. Residues 158-172 show a composition bias toward low complexity; the sequence is SSSRSPRPASSAPSA. A CheB-type methylesterase domain is found at 182-365; that stretch reads KLVAIGASTG…QVWQRLVSDV (184 aa). Residues S189, H216, and D310 contribute to the active site.

It belongs to the CheB family. Phosphorylated by CheA. Phosphorylation of the N-terminal regulatory domain activates the methylesterase activity.

It localises to the cytoplasm. The catalysed reaction is [protein]-L-glutamate 5-O-methyl ester + H2O = L-glutamyl-[protein] + methanol + H(+). It carries out the reaction L-glutaminyl-[protein] + H2O = L-glutamyl-[protein] + NH4(+). Functionally, involved in chemotaxis. Part of a chemotaxis signal transduction system that modulates chemotaxis in response to various stimuli. Catalyzes the demethylation of specific methylglutamate residues introduced into the chemoreceptors (methyl-accepting chemotaxis proteins or MCP) by CheR. Also mediates the irreversible deamidation of specific glutamine residues to glutamic acid. The polypeptide is Protein-glutamate methylesterase/protein-glutamine glutaminase 1 (Saccharophagus degradans (strain 2-40 / ATCC 43961 / DSM 17024)).